The following is an 854-amino-acid chain: MTTTHVLSLPFRKSTQLSLSRAIQQYISAKYDQHPDMFRHDLDTIDALRRDAINVREAHPSGIRKLQMYAAQLVWIGGKFPIDVGADFTWYPALGYHTEHPLVQNNLKYELMNVLYNLAALYSQLAVASNRNSTEGLKTAASWFSHSAGVLTHIKTQVLPELRMPSPPDDMDETTLESLIQLFLAEAQECYWQKAVMDGYKDASIAKLAARVSDLYNEAGEAAMRSEAISSAWIHHMSAKHHHFAAAAQFRAASDCLERKKYGEEIARLRDAVACVNEGLKETRGGYLSKAVVEDLQGLKRRLEEDLKRAEIDNDRVYLHIVPPKTELKRLDRANMAVARVPPQVAKPYEFLGDPSAEFGPALFTKLVPFAVHVAVSIYEERRDRLVNNSIISELESMTSQLHEILSSLNLPGSLQALEKPLGLPGTLVQHADEIRQADALYRLQQGLTDIDKLCSSDLAIFEEGRSLLLAEEEEDSRLRLKYGTERWNRPQSRQDPSPNGGTKLWRQAQDIEGYFGSSTASDQVVREKFNAVRDTLTILAGSDRSIMDFIPNSRRTDIPESLKPALGRLRSAYNDVQRLESRRRKRVESLRARSRADDIKPDILVEAARLERAYPTTAIATAHFEDFFEKRLDRLYESELEAVERDKQEQEKIVQEVKRANKEFEAQKRQVDRAGGGNREREEALQKLDAAYYKYKEIVSNVEVGRKFYNDLSQIVEQWRGLVRGWVSERRRDARSLEEEINMPPLSSLNMHQSSFSYQQQQHHQQPPPPPPQIPFPEPIQPHQPIVEQAHIQSWADNVPQQQPKPVAPGAWAPNMGIKFGSPVAQGQQHQQEQGQPGPVNATWDPSQGIRFG.

The 398-residue stretch at 5-402 (HVLSLPFRKS…SELESMTSQL (398 aa)) folds into the BRO1 domain. Residues 632–699 (RLDRLYESEL…DAAYYKYKEI (68 aa)) adopt a coiled-coil conformation. Disordered stretches follow at residues 739-782 (EEEI…EPIQ) and 801-854 (PQQQ…IRFG). Residues 746 to 759 (PLSSLNMHQSSFSY) are compositionally biased toward polar residues. Positions 767–782 (QPPPPPPQIPFPEPIQ) are enriched in pro residues. Over residues 827–839 (QGQQHQQEQGQPG) the composition is skewed to low complexity.

Belongs to the palA/RIM20 family. Interacts with pacc-1 by binding to its two YPX[LI] motifs.

In terms of biological role, required for the proteolytic cleavage of the transcription factor pacc-1 in response to alkaline ambient pH. May act as a scaffold protein that recruits the calpain-like protease palB/cpr-8 via snf7/vps-3 to its substrate pacc-1. The polypeptide is pH-response regulator protein palA/prr-1 (prr-1) (Neurospora crassa (strain ATCC 24698 / 74-OR23-1A / CBS 708.71 / DSM 1257 / FGSC 987)).